We begin with the raw amino-acid sequence, 417 residues long: MDTSILAVTTNPKGKNYALAVCWLLGVGCLLAWNSMLTIVDYYAYLFPWYHPSRILTIIYQSFSIGALSVLVHKEARLNTRRRNLFGYSLFSLGSLAVLVLNLATSGRGGIGSFIGVCVISAAFGLADAHVYGGMIGDLSMMTPEFLQSFLAGLAASGALTSGLRLVIKAAFKNSRDGLRKGATLFFAMSASFELVCVLLYAYVFPRIPVVKYYRAKAIIQGSRTVWADLAAGGIQVQPITQDEEALRYDHRLNKGDLMLLYSDLAVTLFLVYLLTFSIFPGFLSEDTGKYSLGDWYALVLIAVFNVSDLVGRYVPMVKKLKMKSRKCLLITSLGRLLLIPAFNITGIYGSQGWMIFLMSVLGLSNGYLTVCVITSAPYDLLAPEQNALGNLLVLYICGGMFAGVACDWLWLVGKDW.

Helical transmembrane passes span Ala-20–Val-40, Pro-52–Val-72, Leu-85–Thr-105, Gly-109–Ala-129, Pro-144–Leu-164, Leu-185–Phe-205, Leu-265–Ser-285, Ser-292–Gly-312, Cys-328–Ile-348, Trp-354–Ile-374, and Leu-393–Val-413.

This sequence belongs to the SLC29A/ENT transporter (TC 2.A.57) family. In terms of tissue distribution, expressed in leaves and flowers.

Its subcellular location is the cell membrane. Its function is as follows. May be involved in nucleoside transport. This is Equilibrative nucleotide transporter 2 (ENT2) from Arabidopsis thaliana (Mouse-ear cress).